A 130-amino-acid polypeptide reads, in one-letter code: MKDWLDEIHWNSDGLVPAIAQDRKTGRVLMMAWMNREALSLTASENRAIYWSRSRGKLWRKGEESGHVQKLHELRLDCDADVIILMVEQIGGIACHTGRESCFYRVYEQSGWKTVDPVLKDPDAIYPAGH.

Residue aspartate 77 coordinates Mg(2+). Cysteine 78 contacts Zn(2+). Mg(2+) is bound by residues aspartate 79 and aspartate 81. Zn(2+) is bound by residues cysteine 95 and cysteine 102.

It belongs to the PRA-CH family. Homodimer. Mg(2+) is required as a cofactor. The cofactor is Zn(2+).

It is found in the cytoplasm. The catalysed reaction is 1-(5-phospho-beta-D-ribosyl)-5'-AMP + H2O = 1-(5-phospho-beta-D-ribosyl)-5-[(5-phospho-beta-D-ribosylamino)methylideneamino]imidazole-4-carboxamide. It participates in amino-acid biosynthesis; L-histidine biosynthesis; L-histidine from 5-phospho-alpha-D-ribose 1-diphosphate: step 3/9. Catalyzes the hydrolysis of the adenine ring of phosphoribosyl-AMP. The sequence is that of Phosphoribosyl-AMP cyclohydrolase from Pseudomonas syringae pv. tomato (strain ATCC BAA-871 / DC3000).